Consider the following 260-residue polypeptide: Small ribosomal subunit protein eS1 (260 aa).

Ala-2 is subject to N-acetylalanine; partial.

It belongs to the eukaryotic ribosomal protein eS1 family. Component of the small ribosomal subunit. Mature ribosomes consist of a small (40S) and a large (60S) subunit. The 40S subunit contains about 33 different proteins and 1 molecule of RNA (18S). The 60S subunit contains about 49 different proteins and 3 molecules of RNA (25S, 5.8S and 5S).

The protein resides in the cytoplasm. The sequence is that of Small ribosomal subunit protein eS1 from Mycosarcoma maydis (Corn smut fungus).